We begin with the raw amino-acid sequence, 129 residues long: 3-aminoacrylate deaminase RutC (129 aa).

It belongs to the RutC family.

It catalyses the reaction (Z)-3-aminoacrylate + H2O + H(+) = 3-oxopropanoate + NH4(+). Its function is as follows. Involved in pyrimidine catabolism. Catalyzes the deamination of 3-aminoacrylate to malonic semialdehyde, a reaction that can also occur spontaneously. RutC may facilitate the reaction and modulate the metabolic fitness, rather than catalyzing essential functions. This chain is 3-aminoacrylate deaminase RutC, found in Rhizobium rhizogenes (strain K84 / ATCC BAA-868) (Agrobacterium radiobacter).